Reading from the N-terminus, the 457-residue chain is Aromatic amino acid transport protein AroP (457 aa).

The Cytoplasmic segment spans residues M1–H19. A helical transmembrane segment spans residues I20 to V40. The Periplasmic portion of the chain corresponds to I41–Q42. The chain crosses the membrane as a helical span at residues S43–M63. Residues R64–Y86 lie on the Cytoplasmic side of the membrane. The helical transmembrane segment at W87–A107 threads the bilayer. Residues M108–Y117 are Periplasmic-facing. Residues I118–I138 traverse the membrane as a helical segment. At N139–W155 the chain is on the cytoplasmic side. The chain crosses the membrane as a helical span at residues F156–F176. Residues S177–T201 are Periplasmic-facing. A helical transmembrane segment spans residues G202–I222. The Cytoplasmic segment spans residues T223 to Q240. A helical transmembrane segment spans residues V241–P261. The Periplasmic portion of the chain corresponds to W262–P271. A helical membrane pass occupies residues F272 to V292. Topologically, residues L293–P333 are cytoplasmic. The chain crosses the membrane as a helical span at residues V334 to A354. Over P355 to A358 the chain is Periplasmic. The chain crosses the membrane as a helical span at residues F359 to L379. At A380 to A399 the chain is on the cytoplasmic side. Residues L400–M420 form a helical membrane-spanning segment. Residues L421 to G425 are Periplasmic-facing. The helical transmembrane segment at M426–F446 threads the bilayer. The Cytoplasmic segment spans residues K447–H457.

It belongs to the amino acid-polyamine-organocation (APC) superfamily. Amino acid transporter (AAT) (TC 2.A.3.1) family.

It localises to the cell inner membrane. It catalyses the reaction L-phenylalanine(in) + H(+)(in) = L-phenylalanine(out) + H(+)(out). It carries out the reaction L-tryptophan(in) + H(+)(in) = L-tryptophan(out) + H(+)(out). The catalysed reaction is L-tyrosine(in) + H(+)(in) = L-tyrosine(out) + H(+)(out). Its function is as follows. Permease that is involved in the active transport across the cytoplasmic membrane of all three aromatic amino acids, phenylalanine, tyrosine and tryptophan. The protein is Aromatic amino acid transport protein AroP (aroP) of Shigella flexneri.